Reading from the N-terminus, the 506-residue chain is Procardosin-B (506 aa).

The signal sequence occupies residues 1 to 24 (MGTPIKASLLALFLFFLLSPTAFS). The propeptide occupies 25-70 (VSNGGLLRVGLKKRKVDRLDQLRAHGVHMLGNARKDFGFRRTLSDS). One can recognise a Peptidase A1 domain in the interval 85–503 (YYGEIGIGTP…DYGKLRVGFA (419 aa)). Aspartate 103 is an active-site residue. A disulfide bridge links cysteine 116 with cysteine 122. N-linked (GlcNAc...) asparagine glycans are attached at residues asparagine 139 and asparagine 252. A disulfide bridge connects residues cysteine 281 and cysteine 285. The active site involves aspartate 290. The 103-residue stretch at 315–417 (VLNQQCKTLV…NEVCDQLPTS (103 aa)) folds into the Saposin B-type domain. 4 disulfides stabilise this stretch: cysteine 320/cysteine 411, cysteine 345/cysteine 383, cysteine 351/cysteine 380, and cysteine 425/cysteine 462. N-linked (GlcNAc...) asparagine glycosylation occurs at asparagine 397.

This sequence belongs to the peptidase A1 family. As to quaternary structure, heterodimer of a light chain and a heavy chain. An intermediate form is produced first, and undergoes proteolytic processing to remove the internal plant-specific insert (PSI) and the propeptide. In terms of tissue distribution, detected in pistils, but not in seeds, bracts, midribs, roots, leaves or stamen extracts. Detected in seeds. In stigmas and styles, detected in the transmitting tissue and in contiguous subepidermal layers at the longitudenal grooves of the stigma (at protein level).

It localises to the microsome membrane. The protein localises to the protein storage vacuole. It is found in the secreted. The protein resides in the cell wall. Its subcellular location is the extracellular space. It localises to the extracellular matrix. Its activity is regulated as follows. Inhibited by the specific aspartic proteinase inhibitors diazoacetyl-noleucine methyl ester and pepstatin. In terms of biological role, aspartic protease. Cleaves alpha-lactalbumin but not beta-lactoglobulin. This chain is Procardosin-B, found in Cynara cardunculus (Cardoon).